The primary structure comprises 99 residues: NADH-quinone oxidoreductase subunit K (99 aa).

3 consecutive transmembrane segments (helical) span residues 3–23 (PENY…GVLI), 28–48 (IIVF…FVTF), and 59–79 (VFAF…LAII).

This sequence belongs to the complex I subunit 4L family. NDH-1 is composed of 14 different subunits. Subunits NuoA, H, J, K, L, M, N constitute the membrane sector of the complex.

The protein resides in the cell membrane. The enzyme catalyses a quinone + NADH + 5 H(+)(in) = a quinol + NAD(+) + 4 H(+)(out). NDH-1 shuttles electrons from NADH, via FMN and iron-sulfur (Fe-S) centers, to quinones in the respiratory chain. The immediate electron acceptor for the enzyme in this species is believed to be a menaquinone. Couples the redox reaction to proton translocation (for every two electrons transferred, four hydrogen ions are translocated across the cytoplasmic membrane), and thus conserves the redox energy in a proton gradient. The sequence is that of NADH-quinone oxidoreductase subunit K from Rhodococcus jostii (strain RHA1).